Reading from the N-terminus, the 1172-residue chain is Carbamoyl phosphate synthase arginine-specific large chain, chloroplastic (1172 aa).

Residues 1–10 (MATSLSSAPT) are compositionally biased toward polar residues. Residues 1-37 (MATSLSSAPTQLRPSPSPSHHRLLHRSSLLPFPRRHH) are disordered. A chloroplast-targeting transit peptide spans 1-50 (MATSLSSAPTQLRPSPSPSHHRLLHRSSLLPFPRRHHHRRRRCGALSIAR). A carboxyphosphate synthetic domain region spans residues 72–473 (GRLAGVRKIM…SFQKAVRSLE (402 aa)). ATP-binding residues include Arg199, Arg240, Gly246, Gly247, Lys279, Leu281, Glu286, Gly312, Val313, His314, Gln356, and Glu370. An ATP-grasp 1 domain is found at 203–399 (KQAMDRIGLK…IAKMAAKLSV (197 aa)). Gln356, Glu370, and Asn372 together coordinate Mg(2+). An oligomerization domain region spans residues 474–623 (TGFAGWGCAP…YSSYEYECES (150 aa)). The interval 624 to 1019 (VPTNKKKVLI…GAFAKAQIAA (396 aa)) is carbamoyl phosphate synthetic domain. Positions 761–954 (NAILEELGIE…LAKYASLVMS (194 aa)) constitute an ATP-grasp 2 domain. The ATP site is built by Arg797, Lys836, Leu838, Glu843, Gly869, Ile870, His871, Ser872, Gln912, and Glu925. Gln912, Glu925, and Asn927 together coordinate Mg(2+). The interval 1020 to 1172 (GQKLPLNGTV…QNLQAAQSAS (153 aa)) is allosteric domain. The 142-residue stretch at 1021-1162 (QKLPLNGTVF…QDYFQTTDAS (142 aa)) folds into the MGS-like domain.

Belongs to the CarB family. As to quaternary structure, heterodimer composed of 2 chains; the small (or glutamine) chain promotes the hydrolysis of glutamine to ammonia, which is used by the large (or ammonia) chain to synthesize carbamoyl phosphate. Requires Mg(2+) as cofactor. Mn(2+) is required as a cofactor.

Its subcellular location is the plastid. It localises to the chloroplast. The enzyme catalyses hydrogencarbonate + L-glutamine + 2 ATP + H2O = carbamoyl phosphate + L-glutamate + 2 ADP + phosphate + 2 H(+). The catalysed reaction is hydrogencarbonate + NH4(+) + 2 ATP = carbamoyl phosphate + 2 ADP + phosphate + 2 H(+). It participates in amino-acid biosynthesis; L-arginine biosynthesis; carbamoyl phosphate from bicarbonate: step 1/1. Functionally, large subunit of the arginine-specific carbamoyl phosphate synthase (CPSase). CPSase catalyzes the formation of carbamoyl phosphate from the ammonia moiety of glutamine, hydrogencarbonate, and phosphate donated by ATP, constituting the first step of 2 biosynthetic pathways, one leading to arginine and/or urea and the other to pyrimidine nucleotides. The large subunit (synthetase) binds the substrates ammonia (free or transferred from glutamine from the small subunit), hydrogencarbonate and ATP and carries out an ATP-coupled ligase reaction, activating hydrogencarbonate by forming carboxy phosphate which reacts with ammonia to form carbamoyl phosphate. The polypeptide is Carbamoyl phosphate synthase arginine-specific large chain, chloroplastic (CARB) (Oryza sativa subsp. japonica (Rice)).